The chain runs to 236 residues: Ribitol-5-phosphate cytidylyltransferase (236 aa).

CTP contacts are provided by residues 7-10 (LAGG) and 80-86 (GTDRNET).

It belongs to the IspD/TarI cytidylyltransferase family. TarI subfamily.

It carries out the reaction D-ribitol 5-phosphate + CTP + H(+) = CDP-L-ribitol + diphosphate. It functions in the pathway cell wall biogenesis; poly(ribitol phosphate) teichoic acid biosynthesis. Functionally, catalyzes the transfer of the cytidylyl group of CTP to D-ribitol 5-phosphate. In Listeria monocytogenes serovar 1/2a (strain ATCC BAA-679 / EGD-e), this protein is Ribitol-5-phosphate cytidylyltransferase.